Consider the following 627-residue polypeptide: uncharacterized protein (627 aa).

Residues 1-32 lie on the Extracellular side of the membrane; the sequence is MVDDSNYLTPHETALAVVATAMKKARLQLDTL. A helical transmembrane segment spans residues 33–53; sequence LINSILGGVLFSSGSFLLVAV. The Cytoplasmic portion of the chain corresponds to 54-66; sequence YSEDPDIVARNPG. A helical transmembrane segment spans residues 67–87; that stretch reads IVNLITGVNFAMGLFYVVMMG. Topologically, residues 88–113 are extracellular; it reads ADLFNSNILFFSVGVLRKAVTIYDLM. Residues 114–134 traverse the membrane as a helical segment; the sequence is ISWVVSWLGNIAGSLFVSYLF. The Cytoplasmic portion of the chain corresponds to 135–165; sequence GHLSGISSQKLWIIGSRQIIEQKVSYSFVQT. A helical transmembrane segment spans residues 166–186; sequence FLKGIACNFFVCLAIYLQLMA. The Extracellular segment spans residues 187-192; it reads KPIHVK. The chain crosses the membrane as a helical span at residues 193 to 213; the sequence is FILMSFPIIDFIGIGFTHVVG. Residues 214–218 are Cytoplasmic-facing; sequence DMSAS. A helical membrane pass occupies residues 219–239; it reads FIAMLNGANVSVGKYIWKLLI. Residues 240-245 are Extracellular-facing; the sequence is PASLGN. The chain crosses the membrane as a helical span at residues 246-266; the sequence is IVGGLFFSAVVPFYLHLVVVE. The Cytoplasmic portion of the chain corresponds to 267 to 627; the sequence is RDRKRLSLPE…FYNRHTSPQL (361 aa). Phosphothreonine is present on threonine 305. The disordered stretch occupies residues 512 to 537; that stretch reads PPILPRTTQDTFPHNAPASSPAYTDD. Polar residues predominate over residues 517-533; the sequence is RTTQDTFPHNAPASSPA. At serine 546 the chain carries Phosphoserine. Residue threonine 588 is modified to Phosphothreonine. The segment covering 605–614 has biased composition (basic and acidic residues); the sequence is STTRRQKITE. The disordered stretch occupies residues 605 to 627; it reads STTRRQKITEPKNFYNRHTSPQL.

It belongs to the FNT transporter (TC 1.A.16) family.

Its subcellular location is the membrane. This is an uncharacterized protein from Saccharomyces cerevisiae (strain ATCC 204508 / S288c) (Baker's yeast).